The following is a 389-amino-acid chain: Gastricsin (389 aa).

The first 16 residues, 1 to 16, serve as a signal peptide directing secretion; that stretch reads MKWMVVVLLCLQLLEA. The propeptide at 17–59 is activation peptide; it reads KVVKVPLKKLKSLRETMKEKGLLEEFLKNHKYDPAQKYRYTDF. Positions 73–386 constitute a Peptidase A1 domain; that stretch reads YFGEISIGTP…DMGNNRVGFA (314 aa). D91 is an active-site residue. 2 cysteine pairs are disulfide-bonded: C104-C109 and C268-C272. D277 is an active-site residue. A disulfide bridge links C311 with C344.

The protein belongs to the peptidase A1 family.

The protein resides in the secreted. The catalysed reaction is More restricted specificity than pepsin A, but shows preferential cleavage at Tyr-|-Xaa bonds. High activity on hemoglobin.. Hydrolyzes a variety of proteins. The sequence is that of Gastricsin (PGC) from Rhinolophus ferrumequinum (Greater horseshoe bat).